We begin with the raw amino-acid sequence, 61 residues long: MFAGLPSLSHEQQQKAVERIQELMTQGMSSGEAITTVAQEIRATHTGERIVALFDDEDDEE.

It belongs to the UPF0181 family.

This Enterobacter sp. (strain 638) protein is UPF0181 protein Ent638_2380.